Consider the following 522-residue polypeptide: Paraspeckle component 1 (522 aa).

Met-1 carries the N-acetylmethionine modification. RRM domains lie at 81-153 (CRLF…FATH) and 155-236 (AALT…PMEQ). The segment at 124 to 357 (ESRTLAEIAK…QLRHEEEHRR (234 aa)) is sufficient for paraspeckles localization. The segment at 230 to 357 (IVEPMEQFDD…QLRHEEEHRR (128 aa)) is sufficient for perinucleolar caps localization and interaction with NONO. Positions 282-376 (DEMEKQQREQ…EQEELRRQQE (95 aa)) form a coiled coil. Phosphoserine occurs at positions 408, 472, and 476. A disordered region spans residues 459–522 (GAVHNDRFPQ…FEGPNKRRRY (64 aa)). Polar residues predominate over residues 471–489 (PSQMGSPMGNRTGSETPQA). Residues 497–513 (VSGGPGGFGRGSQGGNF) show a composition bias toward gly residues. Arg-506 bears the Omega-N-methylarginine mark. Ser-508 is modified (phosphoserine).

It belongs to the PSPC family. Forms heterodimers with NONO; this involves formation of a coiled coil domain by helices from both proteins. Found in a RNP complex with CAT2 transcribed nuclear RNA (CTN-RNA). Interaction with NONO is required for its targeting to paraspeckles and perinucleolar caps. Interacts with SFPQ. Part of the HDP-RNP complex composed of at least HEXIM1, PRKDC, XRCC5, XRCC6, paraspeckle proteins (SFPQ, NONO, PSPC1, RBM14, and MATR3) and NEAT1 RNA. Interacts with ALKBH5 (when acetylated); interaction with acetylated ALKBH5 facilitates recognition of N(6)-methyladenosine (m6A) RNAs.

The protein localises to the nucleus speckle. The protein resides in the nucleus. It localises to the nucleolus. It is found in the nucleus matrix. Its subcellular location is the cytoplasm. In terms of biological role, RNA-binding protein required for the formation of nuclear paraspeckles. Binds to poly(A), poly(G) and poly(U) RNA homopolymers. Regulates, cooperatively with NONO and SFPQ, androgen receptor-mediated gene transcription activity in Sertoli cell line. Regulates the circadian clock by repressing the transcriptional activator activity of the CLOCK-BMAL1 heterodimer. Plays a role in the regulation of DNA virus-mediated innate immune response by assembling into the HDP-RNP complex, a complex that serves as a platform for IRF3 phosphorylation and subsequent innate immune response activation through the cGAS-STING pathway. In Rattus norvegicus (Rat), this protein is Paraspeckle component 1 (Pspc1).